The primary structure comprises 250 residues: Ribosomal RNA small subunit methyltransferase J (250 aa).

Residues Arg-96 to Asp-97 and Asp-168 each bind S-adenosyl-L-methionine.

It belongs to the methyltransferase superfamily. RsmJ family.

It localises to the cytoplasm. It carries out the reaction guanosine(1516) in 16S rRNA + S-adenosyl-L-methionine = N(2)-methylguanosine(1516) in 16S rRNA + S-adenosyl-L-homocysteine + H(+). Specifically methylates the guanosine in position 1516 of 16S rRNA. The polypeptide is Ribosomal RNA small subunit methyltransferase J (Neisseria gonorrhoeae (strain ATCC 700825 / FA 1090)).